A 193-amino-acid polypeptide reads, in one-letter code: Large ribosomal subunit protein uL5 (193 aa).

It belongs to the universal ribosomal protein uL5 family. As to quaternary structure, part of the 50S ribosomal subunit; part of the 5S rRNA/L5/L18/L25 subcomplex. Contacts the 5S rRNA and the P site tRNA. Forms a bridge to the 30S subunit in the 70S ribosome.

Its function is as follows. This is one of the proteins that bind and probably mediate the attachment of the 5S RNA into the large ribosomal subunit, where it forms part of the central protuberance. In the 70S ribosome it contacts protein S13 of the 30S subunit (bridge B1b), connecting the 2 subunits; this bridge is implicated in subunit movement. Contacts the P site tRNA; the 5S rRNA and some of its associated proteins might help stabilize positioning of ribosome-bound tRNAs. The polypeptide is Large ribosomal subunit protein uL5 (Rhizorhabdus wittichii (strain DSM 6014 / CCUG 31198 / JCM 15750 / NBRC 105917 / EY 4224 / RW1) (Sphingomonas wittichii)).